Consider the following 450-residue polypeptide: Phosphopentomutase (450 aa).

Serine 93 serves as the catalytic Phosphoserine intermediate. Residues serine 93, aspartate 231, aspartate 233, and aspartate 235 each contribute to the Mg(2+) site. Serine 93 is modified (phosphoserine; by autocatalysis).

Belongs to the phosphohexose mutase family. Homotetramer. Mg(2+) is required as a cofactor. In terms of processing, activated by phosphorylation.

The enzyme catalyses alpha-D-ribose 1-phosphate = D-ribose 5-phosphate. It carries out the reaction 2-deoxy-alpha-D-ribose 1-phosphate = 2-deoxy-D-ribose 5-phosphate. Its function is as follows. Catalyzes the conversion of deoxyribose 1-phosphate to deoxyribose 5-phosphate. Also shows weak activity with glucose 1-phosphate and mannose 1-phosphate. Could be involved in pentose biosynthesis. The protein is Phosphopentomutase of Thermococcus kodakarensis (strain ATCC BAA-918 / JCM 12380 / KOD1) (Pyrococcus kodakaraensis (strain KOD1)).